Reading from the N-terminus, the 443-residue chain is ATP-dependent protease ATPase subunit HslU (443 aa).

ATP contacts are provided by residues isoleucine 18 and 60 to 65; that span reads GVGKTE. Residues 142 to 162 are disordered; sequence LGFEASPSEESNATRQKFRKK. The ATP site is built by aspartate 256, glutamate 321, and arginine 393.

This sequence belongs to the ClpX chaperone family. HslU subfamily. In terms of assembly, a double ring-shaped homohexamer of HslV is capped on each side by a ring-shaped HslU homohexamer. The assembly of the HslU/HslV complex is dependent on binding of ATP.

It is found in the cytoplasm. In terms of biological role, ATPase subunit of a proteasome-like degradation complex; this subunit has chaperone activity. The binding of ATP and its subsequent hydrolysis by HslU are essential for unfolding of protein substrates subsequently hydrolyzed by HslV. HslU recognizes the N-terminal part of its protein substrates and unfolds these before they are guided to HslV for hydrolysis. The chain is ATP-dependent protease ATPase subunit HslU from Nitrosomonas europaea (strain ATCC 19718 / CIP 103999 / KCTC 2705 / NBRC 14298).